Here is a 908-residue protein sequence, read N- to C-terminus: E3 ubiquitin-protein ligase ZNF598 (908 aa).

The segment at 27–67 (CVLCCGDLEATALGRCDHPVCYRCSTKMRVLCEQRYCAVCR) adopts an RING-type zinc-finger fold. The C2H2-type zinc finger occupies 185-208 (PLCKFCDERYLDNDELLKHLRRDH). Disordered stretches follow at residues 292–338 (SRRS…KREE), 350–441 (SVAA…EEDF), 467–557 (PGPP…TVQG), 569–619 (SLLA…LEAP), and 719–744 (PSSH…TPGL). S295 carries the phosphoserine modification. Y304 is subject to Phosphotyrosine. Low complexity predominate over residues 313 to 329 (QGRAGRASGRGAQQNRR). Over residues 358–385 (ETQRVEDREEGSRPKKEEAAARVPEEPR) the composition is skewed to basic and acidic residues. S433 bears the Phosphoserine mark. The span at 482-501 (PALVSSAPKPSSAPSSLISA) shows a compositional bias: low complexity. A compositionally biased stretch (basic residues) spans 529–538 (KAGKGSRGGR).

It belongs to the ZNF598/HEL2 family. As to quaternary structure, interacts with the E2 ubiquitin-conjugating enzyme UBE2D3. Component of the 4EHP-GYF2 complex, at least composed of EIF4E2, GIGYF2 and ZNF598.

It localises to the cytoplasm. Its subcellular location is the cytosol. It catalyses the reaction S-ubiquitinyl-[E2 ubiquitin-conjugating enzyme]-L-cysteine + [acceptor protein]-L-lysine = [E2 ubiquitin-conjugating enzyme]-L-cysteine + N(6)-ubiquitinyl-[acceptor protein]-L-lysine.. The protein operates within protein modification; protein ubiquitination. E3 ubiquitin-protein ligase that plays a key role in the ribosome quality control (RQC), a pathway that takes place when a ribosome has stalled during translation, leading to degradation of nascent peptide chains. ZNF598 is activated when ribosomes are stalled within an mRNA following translation of prematurely polyadenylated mRNAs. Acts as a ribosome collision sensor: specifically recognizes and binds collided di-ribosome, which arises when a trailing ribosome encounters a slower leading ribosome, leading to terminally arrest translation. Following binding to colliding ribosomes, mediates monoubiquitination of 40S ribosomal proteins RPS10/eS10 and RPS3/uS3, and 'Lys-63'-linked polyubiquitination of RPS20/uS10. Polyubiquitination of RPS20/uS10 promotes recruitment of the RQT (ribosome quality control trigger) complex, which drives the disassembly of stalled ribosomes, followed by degradation of nascent peptides. E3 ubiquitin-protein ligase activity is dependent on the E2 ubiquitin-conjugating enzyme UBE2D3. Also acts as an adapter that recruits the 4EHP-GYF2 complex to mRNAs. Independently of its role in RQC, may also act as a negative regulator of interferon-stimulated gene (ISG) expression. This Mus musculus (Mouse) protein is E3 ubiquitin-protein ligase ZNF598.